A 567-amino-acid polypeptide reads, in one-letter code: MDTINTHQQHVIGLDFGSDSVRALIVNAETGQEVSSSVVYYSRWMKGLYCQPAQSQFRHHPQDYLDAMTSAIQEVLATVPQTLADSVVGIGVDTTGSTPAPIDENGTVLALLPEFEHNPNAMFVLWKDHTSVAKADRINELAHSGKFTDYTRYVGGVYSSEWFWAKAAWVSEQDEQVAKRAFSWVELCDWIPAILADTQHPQKLRRGICAAGHKAMWHESWGGLPEQAFLSAISPTLDGIRDRMFTEVFTSDQAAGYLSKAWAIKLGLPEGIAIAIGEFDCHMGAVGAGAGANDLVKVIGTSTCDILMVESQNVGDRTIHGICGQVEGSAMPELLALEAGQSAFGDMYAWFKNVLMWPLQAYAEHNPDFALTAEEIASELLPMLSQAAEQQGIDQYTPVAMDWLNGRRTPYANQRLKGAICDLNLGSSSPAIFSALVESTAHGAKAIVDCFIEQDVTVERVIAIGGIAQKSPYVMQMCADVIGRDIIVVESDQCCALGAAIFAAVAAGVYPTTKSAQAVMASPVRQTYSPTPKVQTLRAQRYATYRELGQHMEQIAEFHQSQEREDV.

Belongs to the ribulokinase family.

The catalysed reaction is D-ribulose + ATP = D-ribulose 5-phosphate + ADP + H(+). It catalyses the reaction L-ribulose + ATP = L-ribulose 5-phosphate + ADP + H(+). It functions in the pathway carbohydrate degradation; L-arabinose degradation via L-ribulose; D-xylulose 5-phosphate from L-arabinose (bacterial route): step 2/3. This chain is Ribulokinase, found in Vibrio parahaemolyticus serotype O3:K6 (strain RIMD 2210633).